The chain runs to 108 residues: uncharacterized protein (108 aa).

The next 3 helical transmembrane spans lie at 36–56 (LAIM…DKMI), 58–78 (FIFV…KLLF), and 88–108 (IVFL…FFNL).

The protein localises to the cell membrane. This is an uncharacterized protein from Alkalihalophilus pseudofirmus (strain ATCC BAA-2126 / JCM 17055 / OF4) (Bacillus pseudofirmus).